A 182-amino-acid chain; its full sequence is Large ribosomal subunit protein uL10 (182 aa).

This sequence belongs to the universal ribosomal protein uL10 family. As to quaternary structure, part of the ribosomal stalk of the 50S ribosomal subunit. The N-terminus interacts with L11 and the large rRNA to form the base of the stalk. The C-terminus forms an elongated spine to which L12 dimers bind in a sequential fashion forming a multimeric L10(L12)X complex.

In terms of biological role, forms part of the ribosomal stalk, playing a central role in the interaction of the ribosome with GTP-bound translation factors. This is Large ribosomal subunit protein uL10 from Janthinobacterium sp. (strain Marseille) (Minibacterium massiliensis).